The following is a 247-amino-acid chain: Coproheme decarboxylase (247 aa).

Residues Arg-129, 143–147 (YPMDK), His-170, Gln-183, and Ser-221 contribute to the Fe-coproporphyrin III site. The active site involves Tyr-143.

Belongs to the ChdC family. Type 1 subfamily. It depends on Fe-coproporphyrin III as a cofactor.

It carries out the reaction Fe-coproporphyrin III + 2 H2O2 + 2 H(+) = heme b + 2 CO2 + 4 H2O. The enzyme catalyses Fe-coproporphyrin III + H2O2 + H(+) = harderoheme III + CO2 + 2 H2O. It catalyses the reaction harderoheme III + H2O2 + H(+) = heme b + CO2 + 2 H2O. It participates in porphyrin-containing compound metabolism; protoheme biosynthesis. Its function is as follows. Involved in coproporphyrin-dependent heme b biosynthesis. Catalyzes the decarboxylation of Fe-coproporphyrin III (coproheme) to heme b (protoheme IX), the last step of the pathway. The reaction occurs in a stepwise manner with a three-propionate intermediate. The protein is Coproheme decarboxylase of Bacillus mycoides (strain KBAB4) (Bacillus weihenstephanensis).